A 196-amino-acid polypeptide reads, in one-letter code: MSSKEQKTPEGQAPEEIIMDQHEEVEAVEPNDSAEQVDPRDEKIANLEVQLAEAQTRERDTVLRIKAEMENLRRRTEQDIEKAHKFALEKFVNELLPVIDSLDRALEVADKANPDMAAMVEGIELTLKSMLDVVRKFGVEVIAETNVPLDPNVHQAIAMVESEEVPAGNVLGIMQKGYTLNGRTIRAAMVTVAKAK.

A disordered region spans residues 1 to 40; it reads MSSKEQKTPEGQAPEEIIMDQHEEVEAVEPNDSAEQVDPR.

It belongs to the GrpE family. As to quaternary structure, homodimer.

Its subcellular location is the cytoplasm. In terms of biological role, participates actively in the response to hyperosmotic and heat shock by preventing the aggregation of stress-denatured proteins, in association with DnaK and GrpE. It is the nucleotide exchange factor for DnaK and may function as a thermosensor. Unfolded proteins bind initially to DnaJ; upon interaction with the DnaJ-bound protein, DnaK hydrolyzes its bound ATP, resulting in the formation of a stable complex. GrpE releases ADP from DnaK; ATP binding to DnaK triggers the release of the substrate protein, thus completing the reaction cycle. Several rounds of ATP-dependent interactions between DnaJ, DnaK and GrpE are required for fully efficient folding. This chain is Protein GrpE, found in Salmonella enteritidis PT4 (strain P125109).